Reading from the N-terminus, the 382-residue chain is Anhydro-N-acetylmuramic acid kinase (382 aa).

22 to 29 (GTSMDGVD) is an ATP binding site.

Belongs to the anhydro-N-acetylmuramic acid kinase family.

It carries out the reaction 1,6-anhydro-N-acetyl-beta-muramate + ATP + H2O = N-acetyl-D-muramate 6-phosphate + ADP + H(+). Its pathway is amino-sugar metabolism; 1,6-anhydro-N-acetylmuramate degradation. It participates in cell wall biogenesis; peptidoglycan recycling. Functionally, catalyzes the specific phosphorylation of 1,6-anhydro-N-acetylmuramic acid (anhMurNAc) with the simultaneous cleavage of the 1,6-anhydro ring, generating MurNAc-6-P. Is required for the utilization of anhMurNAc either imported from the medium or derived from its own cell wall murein, and thus plays a role in cell wall recycling. In Burkholderia lata (strain ATCC 17760 / DSM 23089 / LMG 22485 / NCIMB 9086 / R18194 / 383), this protein is Anhydro-N-acetylmuramic acid kinase.